We begin with the raw amino-acid sequence, 674 residues long: Protein tesmin/TSO1-like CXC 2 (674 aa).

2 stretches are compositionally biased toward polar residues: residues 1 to 16 and 76 to 89; these read MDTP…TPIS and THNS…NSVE. Disordered regions lie at residues 1-20 and 69-113; these read MDTP…KSRF and KESR…GLNI. Positions 95–109 are enriched in basic and acidic residues; it reads STSHEEVPAEGEDTK. In terms of domain architecture, CRC spans 373–498; sequence SCKRCNCKKS…RCEGCKNAFG (126 aa). Disordered stretches follow at residues 504 to 529 and 623 to 655; these read SIDM…SQQN and IPNI…RRNG. A compositionally biased stretch (acidic residues) spans 507 to 516; that stretch reads MEAEQEEENE.

It belongs to the lin-54 family. As to expression, ubiquitous but expressed mostly in all the aerial organs with highest expression in flowers.

It localises to the nucleus. Plays a role in development of both male and female reproductive tissues. In Arabidopsis thaliana (Mouse-ear cress), this protein is Protein tesmin/TSO1-like CXC 2 (TCX2).